Consider the following 352-residue polypeptide: B1 bradykinin receptor (352 aa).

The Extracellular portion of the chain corresponds to 1–41 (MAAQTLLELQPSNQSQLSALNTTSCDNAREAWDLLYQVLPI). Asn-13 and Asn-21 each carry an N-linked (GlcNAc...) asparagine glycan. Residues 42–62 (FILTICAFGLLGNLFVLSVFL) traverse the membrane as a helical segment. The Cytoplasmic portion of the chain corresponds to 63 to 72 (LLRRRLTVAE). The chain crosses the membrane as a helical span at residues 73-93 (IYLVNLAASDLVFVLGLPFWA). The Extracellular segment spans residues 94 to 110 (QNIWNQFNWPFGDLLCR). Residues Cys-109 and Cys-188 are joined by a disulfide bond. The chain crosses the membrane as a helical span at residues 111–131 (VVNGVIKANLFISIFLMVAIS). Over 132-153 (QDRYCVLVHPMASRRRRRRRRA) the chain is Cytoplasmic. The helical transmembrane segment at 154–174 (RATCMVIWAVGALLSTPTFLL) threads the bilayer. Topologically, residues 175–206 (RSVSAVQDLNISACILLLPHQAWHVARIVELN) are extracellular. N-linked (GlcNAc...) asparagine glycosylation is present at Asn-184. The chain crosses the membrane as a helical span at residues 207-227 (VLGFLLPLAAIIFFNGHILAS). The Cytoplasmic portion of the chain corresponds to 228-250 (LRGQGEVSQTRIGGPKDCKTTVL). Residues 251-271 (ILTLVAAFLVCWAPYHCFAFL) form a helical membrane-spanning segment. The Extracellular portion of the chain corresponds to 272–294 (EFLFQVRAVRGCFWEDFIDLGLQ). Residues 295-315 (LANFFAFTNSCLNPVIYVFVG) traverse the membrane as a helical segment. Topologically, residues 316–326 (RLFRTKVWELY) are cytoplasmic. Cys-329 carries the S-palmitoyl cysteine lipid modification.

Belongs to the G-protein coupled receptor 1 family. Bradykinin receptor subfamily. BDKRB1 sub-subfamily.

Its subcellular location is the cell membrane. Its function is as follows. This is a receptor for bradykinin. Could be a factor in chronic pain and inflammation. The protein is B1 bradykinin receptor (BDKRB1) of Tupaia minor (Pigmy tree shrew).